The following is a 695-amino-acid chain: Tail-specific protease (695 aa).

The signal sequence occupies residues 1-29; that stretch reads MVMKFKMSKNVICYTWLSVCLSSAIPAFA. The 61-residue stretch at 256–316 folds into the PDZ domain; that stretch reads IGTTLQSEDD…RLEDLVEKIK (61 aa). Active-site charge relay system residues include Ser459, Asp470, and Lys484.

Belongs to the peptidase S41A family.

The protein localises to the cell inner membrane. It carries out the reaction The enzyme shows specific recognition of a C-terminal tripeptide, Xaa-Yaa-Zaa, in which Xaa is preferably Ala or Leu, Yaa is preferably Ala or Tyr, and Zaa is preferably Ala, but then cleaves at a variable distance from the C-terminus. A typical cleavage is -Ala-Ala-|-Arg-Ala-Ala-Lys-Glu-Asn-Tyr-Ala-Leu-Ala-Ala.. In terms of biological role, involved in the cleavage of a C-terminal peptide of 11 residues from the precursor form of penicillin-binding protein 3 (PBP3). May be involved in protection of the bacterium from thermal and osmotic stresses. The chain is Tail-specific protease (prc) from Haemophilus influenzae (strain ATCC 51907 / DSM 11121 / KW20 / Rd).